The primary structure comprises 793 residues: Calcium permeable stress-gated cation channel 1 (793 aa).

The Lumenal portion of the chain corresponds to 1–21; sequence MAFNGYGIFDSDPRKNPSSDL. The helical transmembrane segment at 22–42 threads the bilayer; it reads RTQFWLAFLLGASACVFFCFF. Over 43-95 the chain is Cytoplasmic; sequence RKRWKVLYAPRTTIEGLNLPTLSSSYYKWLMDLVNIPDDVVQNCAGLDGYVFL. Residues 96 to 116 traverse the membrane as a helical segment; that stretch reads LFFKMGIKFLSFASLLGVLII. At 117–192 the chain is on the lumenal side; sequence MPVNKHFRGD…IPGLPQPGDG (76 aa). Residues 193 to 213 form a helical membrane-spanning segment; sequence FLYLYVLFTYFISIFLLYVLF. At 214–444 the chain is on the cytoplasmic side; the sequence is SSTKSIADIR…HKFFQGWFIT (231 aa). A helical membrane pass occupies residues 445–465; it reads LVTFMIILLWTVPVGAIAVFI. The Lumenal portion of the chain corresponds to 466-493; the sequence is NLDTIRRLWPELGRMIEDLPFLNSLLRT. The helical transmembrane segment at 494–514 threads the bilayer; the sequence is FLPTLVYSLFISISPFLFRWL. Over 515–534 the chain is Cytoplasmic; that stretch reads SSMQGLSSRAEEEIYAVGKN. Residues 535-555 form a helical membrane-spanning segment; sequence YAYLFVNFFLVYVIAGSTSIW. Topologically, residues 556 to 577 are lumenal; it reads ELAKDTTSFAHFLANRLPHQAQ. A helical transmembrane segment spans residues 578–598; it reads FFIDLIVLQGIGMFPLKLIQL. The Cytoplasmic portion of the chain corresponds to 599–646; it reads GKLSSYFVRRSFVPYSIASKKFETPDSFSVGIFLPQPMFIMLICLCYS. A helical transmembrane segment spans residues 647 to 667; the sequence is IISPLILVFGLIYFIIGFLVY. At 668–687 the chain is on the lumenal side; it reads KYELIYQMEHPQHSTGELWS. A helical transmembrane segment spans residues 688–708; sequence TIFLRMIFGCVIMQLTMMGLM. The Cytoplasmic segment spans residues 709–713; sequence SLRKA. Residues 714-734 form a helical membrane-spanning segment; the sequence is YWLSTVIFPLLCFTVISAYNF. The Lumenal segment spans residues 735–793; it reads STMIRSSMQFVSLYYIRTHQSNTLSSESESRNSESSGSYVHPGFDLSNEELPLIDLNTA. Positions 759-778 are disordered; sequence SSESESRNSESSGSYVHPGF.

This sequence belongs to the CSC1 (TC 1.A.17) family.

The protein resides in the vacuole membrane. Acts as an osmosensitive calcium-permeable cation channel. The chain is Calcium permeable stress-gated cation channel 1 from Schizosaccharomyces pombe (strain 972 / ATCC 24843) (Fission yeast).